The sequence spans 132 residues: Fatty acid-binding protein 12 (132 aa).

A fatty acid is bound by residues R107 and R127–Y129.

It belongs to the calycin superfamily. Fatty-acid binding protein (FABP) family. In terms of tissue distribution, highly expressed in adult retina and testis.

Functionally, may play a role in lipid transport. The chain is Fatty acid-binding protein 12 (Fabp12) from Mus musculus (Mouse).